The chain runs to 342 residues: N-acetyl-gamma-glutamyl-phosphate reductase (342 aa).

The active site involves Cys-149.

Belongs to the NAGSA dehydrogenase family. Type 1 subfamily.

The protein resides in the cytoplasm. It carries out the reaction N-acetyl-L-glutamate 5-semialdehyde + phosphate + NADP(+) = N-acetyl-L-glutamyl 5-phosphate + NADPH + H(+). It participates in amino-acid biosynthesis; L-arginine biosynthesis; N(2)-acetyl-L-ornithine from L-glutamate: step 3/4. Its function is as follows. Catalyzes the NADPH-dependent reduction of N-acetyl-5-glutamyl phosphate to yield N-acetyl-L-glutamate 5-semialdehyde. This chain is N-acetyl-gamma-glutamyl-phosphate reductase, found in Nitrosomonas eutropha (strain DSM 101675 / C91 / Nm57).